The following is a 96-amino-acid chain: UPF0235 protein CKO_04329 (96 aa).

It belongs to the UPF0235 family.

In Citrobacter koseri (strain ATCC BAA-895 / CDC 4225-83 / SGSC4696), this protein is UPF0235 protein CKO_04329.